The chain runs to 335 residues: Holliday junction branch migration complex subunit RuvB (335 aa).

The segment at 1–183 (MDERIISSET…FGVIDHLEFY (183 aa)) is large ATPase domain (RuvB-L). ATP-binding positions include L22, R23, G64, K67, T68, T69, 130 to 132 (EDY), R173, Y183, and R220. T68 is a binding site for Mg(2+). Residues 184-254 (TEEQLTEIVL…LAKEALTLLQ (71 aa)) form a small ATPAse domain (RuvB-S) region. The interval 257–335 (PRGLDTIDQK…HLGISYEKEV (79 aa)) is head domain (RuvB-H). DNA is bound by residues R293, R312, and R317.

The protein belongs to the RuvB family. As to quaternary structure, homohexamer. Forms an RuvA(8)-RuvB(12)-Holliday junction (HJ) complex. HJ DNA is sandwiched between 2 RuvA tetramers; dsDNA enters through RuvA and exits via RuvB. An RuvB hexamer assembles on each DNA strand where it exits the tetramer. Each RuvB hexamer is contacted by two RuvA subunits (via domain III) on 2 adjacent RuvB subunits; this complex drives branch migration. In the full resolvosome a probable DNA-RuvA(4)-RuvB(12)-RuvC(2) complex forms which resolves the HJ.

Its subcellular location is the cytoplasm. It carries out the reaction ATP + H2O = ADP + phosphate + H(+). Functionally, the RuvA-RuvB-RuvC complex processes Holliday junction (HJ) DNA during genetic recombination and DNA repair, while the RuvA-RuvB complex plays an important role in the rescue of blocked DNA replication forks via replication fork reversal (RFR). RuvA specifically binds to HJ cruciform DNA, conferring on it an open structure. The RuvB hexamer acts as an ATP-dependent pump, pulling dsDNA into and through the RuvAB complex. RuvB forms 2 homohexamers on either side of HJ DNA bound by 1 or 2 RuvA tetramers; 4 subunits per hexamer contact DNA at a time. Coordinated motions by a converter formed by DNA-disengaged RuvB subunits stimulates ATP hydrolysis and nucleotide exchange. Immobilization of the converter enables RuvB to convert the ATP-contained energy into a lever motion, pulling 2 nucleotides of DNA out of the RuvA tetramer per ATP hydrolyzed, thus driving DNA branch migration. The RuvB motors rotate together with the DNA substrate, which together with the progressing nucleotide cycle form the mechanistic basis for DNA recombination by continuous HJ branch migration. Branch migration allows RuvC to scan DNA until it finds its consensus sequence, where it cleaves and resolves cruciform DNA. The protein is Holliday junction branch migration complex subunit RuvB of Listeria monocytogenes serotype 4a (strain HCC23).